A 555-amino-acid polypeptide reads, in one-letter code: Inositol 1,4,5-trisphosphate receptor-interacting protein-like 1 (555 aa).

The signal sequence occupies residues 1–24 (MNVDAEASMAVISLLFLAVMYVVH). Over 25–103 (HPLMVSDRMD…WPFQADGQEG (79 aa)) the chain is Extracellular. The stretch at 38–74 (LARSRQLEKRMSEEMRLLEMEFEERKRAAEQRQKAEN) forms a coiled coil. Residues 104–124 (PLGWMLGNLWNTGLFCLFLVF) form a helical membrane-spanning segment. Topologically, residues 125–555 (ELLRQNMQHE…LPHAPLAAAP (431 aa)) are cytoplasmic.

Belongs to the ITPRIP family. Expressed in testis and tumoral cells.

It localises to the cell membrane. Functions as a ligand of CD3E, inhibiting TCR-CD3 complex signaling to regulate T cell activation. Induces stable CD3E-NCK1 binding, thereby preventing the CD3E-ZAP70 interaction and subsequently inhibiting the activation of the downstream ERK-NFkB signaling cascade and calcium influx. The protein is Inositol 1,4,5-trisphosphate receptor-interacting protein-like 1 of Homo sapiens (Human).